The sequence spans 388 residues: Phosphopentomutase (388 aa).

Mn(2+) contacts are provided by aspartate 10, aspartate 282, histidine 287, aspartate 323, histidine 324, and histidine 335.

It belongs to the phosphopentomutase family. Mn(2+) is required as a cofactor.

Its subcellular location is the cytoplasm. The enzyme catalyses 2-deoxy-alpha-D-ribose 1-phosphate = 2-deoxy-D-ribose 5-phosphate. The catalysed reaction is alpha-D-ribose 1-phosphate = D-ribose 5-phosphate. It functions in the pathway carbohydrate degradation; 2-deoxy-D-ribose 1-phosphate degradation; D-glyceraldehyde 3-phosphate and acetaldehyde from 2-deoxy-alpha-D-ribose 1-phosphate: step 1/2. Isomerase that catalyzes the conversion of deoxy-ribose 1-phosphate (dRib-1-P) and ribose 1-phosphate (Rib-1-P) to deoxy-ribose 5-phosphate (dRib-5-P) and ribose 5-phosphate (Rib-5-P), respectively. This Carboxydothermus hydrogenoformans (strain ATCC BAA-161 / DSM 6008 / Z-2901) protein is Phosphopentomutase.